We begin with the raw amino-acid sequence, 704 residues long: Elongation factor G (704 aa).

The tr-type G domain occupies 8-290; the sequence is ARYRNIGISA…AVVDYLPSPV (283 aa). GTP contacts are provided by residues 17–24, 88–92, and 142–145; these read AHIDAGKT, DTPGH, and NKMD.

The protein belongs to the TRAFAC class translation factor GTPase superfamily. Classic translation factor GTPase family. EF-G/EF-2 subfamily.

The protein resides in the cytoplasm. Catalyzes the GTP-dependent ribosomal translocation step during translation elongation. During this step, the ribosome changes from the pre-translocational (PRE) to the post-translocational (POST) state as the newly formed A-site-bound peptidyl-tRNA and P-site-bound deacylated tRNA move to the P and E sites, respectively. Catalyzes the coordinated movement of the two tRNA molecules, the mRNA and conformational changes in the ribosome. The polypeptide is Elongation factor G (Pectobacterium carotovorum subsp. carotovorum (strain PC1)).